Consider the following 287-residue polypeptide: MKRIFLLIATNMAILLVASIVMSILGVNTSTMGGLLVFAAIFGFGGAFISLAISKWMAKKTMGCEVITTPRDNMERWLVDTVARQAEQAGIKMPEVAIYQSPELNAFATGPSKDNSLVAVSSGLLYGMTQDEIEGVLAHEVSHVANGDMVTLTLIQGVVNTFVIFAARVVASIIDNFVASNDEEGEGLGMFAYMAVVFVLDMLFGILASMIVAYFSRVREFKADAGGAQLAGKHKMIAALDRLRQGPETGAMPAQMAAFGINGKKSMAELMMSHPPLEKRIEALRAQ.

Helical transmembrane passes span 4–24 (IFLL…VMSI) and 33–53 (GGLL…SLAI). His-139 serves as a coordination point for Zn(2+). Residue Glu-140 is part of the active site. His-143 provides a ligand contact to Zn(2+). The next 2 helical transmembrane spans lie at 154-174 (LIQG…ASII) and 195-215 (AVVF…VAYF). Zn(2+) is bound at residue Glu-220.

This sequence belongs to the peptidase M48B family. Zn(2+) serves as cofactor.

It is found in the cell inner membrane. The chain is Protease HtpX from Shewanella loihica (strain ATCC BAA-1088 / PV-4).